Consider the following 326-residue polypeptide: Putative UPF0725 protein At1g28500 (326 aa).

Residues 301–320 are compositionally biased toward basic and acidic residues; that stretch reads KDTEQRSKTRQSEEKVESSQ. A disordered region spans residues 301–326; the sequence is KDTEQRSKTRQSEEKVESSQKRSRLC.

It belongs to the UPF0725 (EMB2204) family.

This is Putative UPF0725 protein At1g28500 from Arabidopsis thaliana (Mouse-ear cress).